A 156-amino-acid polypeptide reads, in one-letter code: Cyanate hydratase (156 aa).

Residues Arg-96, Glu-99, and Ser-122 contribute to the active site.

This sequence belongs to the cyanase family.

The enzyme catalyses cyanate + hydrogencarbonate + 3 H(+) = NH4(+) + 2 CO2. Functionally, catalyzes the reaction of cyanate with bicarbonate to produce ammonia and carbon dioxide. This chain is Cyanate hydratase, found in Burkholderia cenocepacia (strain ATCC BAA-245 / DSM 16553 / LMG 16656 / NCTC 13227 / J2315 / CF5610) (Burkholderia cepacia (strain J2315)).